Here is a 366-residue protein sequence, read N- to C-terminus: Chalcone synthase B (366 aa).

Residue C172 is part of the active site.

Belongs to the thiolase-like superfamily. Chalcone/stilbene synthases family.

The enzyme catalyses (E)-4-coumaroyl-CoA + 3 malonyl-CoA + 3 H(+) = 2',4,4',6'-tetrahydroxychalcone + 3 CO2 + 4 CoA. It functions in the pathway secondary metabolite biosynthesis; flavonoid biosynthesis. Its function is as follows. The primary product of this enzyme is 4,2',4',6'-tetrahydroxychalcone (also termed naringenin-chalcone or chalcone) which can under specific conditions spontaneously isomerize into naringenin. This chain is Chalcone synthase B (CHSB), found in Ipomoea triloba (Trilobed morning glory).